A 322-amino-acid polypeptide reads, in one-letter code: CXXC-type zinc finger protein 5 (322 aa).

Residues 1 to 10 show a composition bias toward gly residues; it reads MSSLGGGSQD. Residues 1-100 are disordered; that stretch reads MSSLGGGSQD…SGGGSMMGGE (100 aa). Composition is skewed to low complexity over residues 11 to 20 and 28 to 52; these read AGGSSSSSTN and SGPK…VADD. Thr-53 bears the Phosphothreonine mark. Residues 87-97 are compositionally biased toward gly residues; the sequence is SSGGSGGGSMM. Residues 256–297 form a CXXC-type zinc finger; it reads GKKKRKRCGMCAPCRRRINCEQCSSCRNRKTGHQICKFRKCE. The Nuclear localization signal motif lies at 257–262; that stretch reads KKKRKR. 8 residues coordinate Zn(2+): Cys-263, Cys-266, Cys-269, Cys-275, Cys-278, Cys-281, Cys-291, and Cys-296.

In terms of assembly, interacts with DVL1. Interacts with RBPJ.

The protein resides in the nucleus. It localises to the cytoplasm. In terms of biological role, may indirectly participate in activation of the NF-kappa-B and MAPK pathways. Acts as a mediator of BMP4-mediated modulation of canonical Wnt signaling activity in neural stem cells. Required for DNA damage-induced ATM phosphorylation, p53 activation and cell cycle arrest. Involved in myelopoiesis. Transcription factor. Binds to the oxygen responsive element of COX4I2 and represses its transcription under hypoxia conditions (4% oxygen), as well as normoxia conditions (20% oxygen). May repress COX4I2 transactivation induced by CHCHD2 and RBPJ. Binds preferentially to DNA containing cytidine-phosphate-guanosine (CpG) dinucleotides over CpH (H=A, T, and C), hemimethylated-CpG and hemimethylated-hydroxymethyl-CpG. This is CXXC-type zinc finger protein 5 (CXXC5) from Homo sapiens (Human).